We begin with the raw amino-acid sequence, 117 residues long: Large ribosomal subunit protein bL19 (117 aa).

It belongs to the bacterial ribosomal protein bL19 family.

Its function is as follows. This protein is located at the 30S-50S ribosomal subunit interface and may play a role in the structure and function of the aminoacyl-tRNA binding site. The chain is Large ribosomal subunit protein bL19 from Colwellia psychrerythraea (strain 34H / ATCC BAA-681) (Vibrio psychroerythus).